A 117-amino-acid chain; its full sequence is Large ribosomal subunit protein bL20 (117 aa).

The protein belongs to the bacterial ribosomal protein bL20 family.

Binds directly to 23S ribosomal RNA and is necessary for the in vitro assembly process of the 50S ribosomal subunit. It is not involved in the protein synthesizing functions of that subunit. This Pasteurella multocida (strain Pm70) protein is Large ribosomal subunit protein bL20.